The chain runs to 256 residues: 3-dehydroquinate dehydratase (256 aa).

Residues Ser19, 38 to 40 (EIR), and Arg68 contribute to the 3-dehydroquinate site. Residue His122 is the Proton donor/acceptor of the active site. Lys147 functions as the Schiff-base intermediate with substrate in the catalytic mechanism. 3-dehydroquinate is bound by residues Arg185, Thr204, and Gln208.

It belongs to the type-I 3-dehydroquinase family. Homodimer.

It carries out the reaction 3-dehydroquinate = 3-dehydroshikimate + H2O. Its pathway is metabolic intermediate biosynthesis; chorismate biosynthesis; chorismate from D-erythrose 4-phosphate and phosphoenolpyruvate: step 3/7. Functionally, involved in the third step of the chorismate pathway, which leads to the biosynthesis of aromatic amino acids. Catalyzes the cis-dehydration of 3-dehydroquinate (DHQ) and introduces the first double bond of the aromatic ring to yield 3-dehydroshikimate. The sequence is that of 3-dehydroquinate dehydratase from Methanospirillum hungatei JF-1 (strain ATCC 27890 / DSM 864 / NBRC 100397 / JF-1).